The chain runs to 289 residues: Phosphatidylglycerol--prolipoprotein diacylglyceryl transferase (289 aa).

7 helical membrane passes run 23–43 (ALHWYGLMYLVGFVFAMWLAV), 61–81 (LLYMGFLGVFVGGRLGYVLFY), 99–119 (GGMSFHGGLMGVICVMLWFAH), 125–145 (FFQVADFIAPLIPFGLGAGRL), 199–219 (SQLYQMMLEGVALFIILNLFI), 226–246 (GSVSGLFLIGYGTFRIITEFF), and 259–279 (LFSMGQILSLPMVIAGILMMV). An a 1,2-diacyl-sn-glycero-3-phospho-(1'-sn-glycerol)-binding site is contributed by R144.

This sequence belongs to the Lgt family.

It is found in the cell inner membrane. The enzyme catalyses L-cysteinyl-[prolipoprotein] + a 1,2-diacyl-sn-glycero-3-phospho-(1'-sn-glycerol) = an S-1,2-diacyl-sn-glyceryl-L-cysteinyl-[prolipoprotein] + sn-glycerol 1-phosphate + H(+). The protein operates within protein modification; lipoprotein biosynthesis (diacylglyceryl transfer). Its function is as follows. Catalyzes the transfer of the diacylglyceryl group from phosphatidylglycerol to the sulfhydryl group of the N-terminal cysteine of a prolipoprotein, the first step in the formation of mature lipoproteins. The sequence is that of Phosphatidylglycerol--prolipoprotein diacylglyceryl transferase from Pectobacterium carotovorum subsp. carotovorum (strain PC1).